Here is a 1104-residue protein sequence, read N- to C-terminus: Protein transport protein SEC31 homolog B (1104 aa).

WD repeat units lie at residues 5-45, 62-109, 120-160, 170-210, 214-257, 261-301, and 304-344; these read KGVG…EIFK, PSSE…GSQP, VHKG…EPSH, ATQG…PIIN, SVRR…SPVR, GHQR…IVAE, and AGNN…RYGV. Position 526 is a phosphothreonine (T526). The interval 527–562 is disordered; sequence PVSTSAKDFMPSDTDFSTKGEETQEMQEEEEESSDP. The span at 549 to 560 shows a compositional bias: acidic residues; the sequence is TQEMQEEEEESS. Residues 662–707 form a WD 8 repeat; sequence TLCDALASKLMAAGNTLAAVLCYICAGNVDRTVEIWSRSLANERDG. Disordered regions lie at residues 782 to 811, 851 to 874, 892 to 931, and 952 to 994; these read LSAE…PTQA, HQAQ…PSMR, QQPT…QYPN, and TPGV…SNVP. 3 stretches are compositionally biased toward polar residues: residues 786–811, 863–874, and 892–908; these read PETN…PTQA, PAPTSNAQPSMR, and QQPT…SNNA. A compositionally biased stretch (low complexity) spans 959 to 977; it reads SVQPASPPTQQAAAQAAPA.

It belongs to the WD repeat SEC31 family. As to quaternary structure, interacts with SEC13A and SEC13B.

The protein localises to the golgi apparatus. It is found in the endoplasmic reticulum. Its function is as follows. Required for protein transport from the endoplasmic reticulum to the Golgi apparatus. This Arabidopsis thaliana (Mouse-ear cress) protein is Protein transport protein SEC31 homolog B.